A 149-amino-acid chain; its full sequence is Snake venom vascular endothelial growth factor toxin 2 (149 aa).

Residues M1 to G24 form the signal peptide. Q25 is modified (pyrrolidone carboxylic acid). 3 disulfide bridges follow: C38/C80, C69/C115, and C73/C117. The interval R118–F149 is disordered.

The protein belongs to the PDGF/VEGF growth factor family. Snake venom VEGF subfamily. As to quaternary structure, homodimer; disulfide-linked. Interacts with VEGF receptor-1 (FLT1) with a high affinity, whereas it binds to VEGF receptor-2 (KDR) with a low affinity. Does not bind VEGF receptor-3 (FLT4). In terms of tissue distribution, expressed by the venom gland.

It localises to the secreted. In terms of biological role, snake venom VEGFs that may contribute to venom dispersion and prey subjugation by inducing vascular permeability and hypotension. This protein induces an increase in capillary permeability after intradermal injection, as well as a drastic hypotensive effect after intravenous injection. The hypotension is mediated by nitric oxide (NO), which is produced by VEGF-activated endothelium NO synthase. Also induces angiogenesis in vitro. Like other crotalid VEGFs, this protein interacts with VEGF receptor-1 (FLT1) with a high affinity, whereas it binds to VEGF receptor-2 (KDR) with a low affinity. The polypeptide is Snake venom vascular endothelial growth factor toxin 2 (Sistrurus catenatus edwardsii (Desert massasauga)).